Consider the following 254-residue polypeptide: Ribonuclease HII (254 aa).

The 188-residue stretch at 67 to 254 (IVIAGVDEVG…HRMSFLKNII (188 aa)) folds into the RNase H type-2 domain. 3 residues coordinate a divalent metal cation: Asp73, Glu74, and Asp170.

This sequence belongs to the RNase HII family. Mn(2+) is required as a cofactor. Mg(2+) serves as cofactor.

Its subcellular location is the cytoplasm. It carries out the reaction Endonucleolytic cleavage to 5'-phosphomonoester.. In terms of biological role, endonuclease that specifically degrades the RNA of RNA-DNA hybrids. This is Ribonuclease HII from Clostridium acetobutylicum (strain ATCC 824 / DSM 792 / JCM 1419 / IAM 19013 / LMG 5710 / NBRC 13948 / NRRL B-527 / VKM B-1787 / 2291 / W).